A 393-amino-acid polypeptide reads, in one-letter code: Elongation factor Tu (393 aa).

Residues 10-203 (KPHVNIGTIG…AVDNYIPTPV (194 aa)) form the tr-type G domain. The tract at residues 19-26 (GHVDHGKT) is G1. 19-26 (GHVDHGKT) contributes to the GTP binding site. Thr-26 is a binding site for Mg(2+). The interval 60-64 (GITIS) is G2. Residues 81-84 (DCPG) form a G3 region. Residues 81–85 (DCPGH) and 136–139 (NKVD) contribute to the GTP site. Residues 136–139 (NKVD) form a G4 region. The tract at residues 173 to 175 (SAL) is G5.

It belongs to the TRAFAC class translation factor GTPase superfamily. Classic translation factor GTPase family. EF-Tu/EF-1A subfamily. Monomer.

Its subcellular location is the cytoplasm. The catalysed reaction is GTP + H2O = GDP + phosphate + H(+). Functionally, GTP hydrolase that promotes the GTP-dependent binding of aminoacyl-tRNA to the A-site of ribosomes during protein biosynthesis. The protein is Elongation factor Tu of Chloroherpeton thalassium (strain ATCC 35110 / GB-78).